A 297-amino-acid polypeptide reads, in one-letter code: 33 kDa chaperonin (297 aa).

Intrachain disulfides connect Cys232/Cys234 and Cys266/Cys269.

The protein belongs to the HSP33 family. Post-translationally, under oxidizing conditions two disulfide bonds are formed involving the reactive cysteines. Under reducing conditions zinc is bound to the reactive cysteines and the protein is inactive.

The protein localises to the cytoplasm. In terms of biological role, redox regulated molecular chaperone. Protects both thermally unfolding and oxidatively damaged proteins from irreversible aggregation. Plays an important role in the bacterial defense system toward oxidative stress. In Pseudomonas paraeruginosa (strain DSM 24068 / PA7) (Pseudomonas aeruginosa (strain PA7)), this protein is 33 kDa chaperonin.